The chain runs to 1398 residues: DNA-directed RNA polymerase subunit beta' (1398 aa).

Cys71, Cys73, Cys86, and Cys89 together coordinate Zn(2+). Mg(2+) contacts are provided by Asp462, Asp464, and Asp466. Residues Cys810, Cys883, Cys890, and Cys893 each contribute to the Zn(2+) site. A disordered region spans residues 1377-1398 (EKQAAVVSPAPEAELPALPPAE). Residues 1380–1392 (AAVVSPAPEAELP) are compositionally biased toward low complexity.

This sequence belongs to the RNA polymerase beta' chain family. The RNAP catalytic core consists of 2 alpha, 1 beta, 1 beta' and 1 omega subunit. When a sigma factor is associated with the core the holoenzyme is formed, which can initiate transcription. The cofactor is Mg(2+). Zn(2+) is required as a cofactor.

The catalysed reaction is RNA(n) + a ribonucleoside 5'-triphosphate = RNA(n+1) + diphosphate. DNA-dependent RNA polymerase catalyzes the transcription of DNA into RNA using the four ribonucleoside triphosphates as substrates. The chain is DNA-directed RNA polymerase subunit beta' from Bradyrhizobium diazoefficiens (strain JCM 10833 / BCRC 13528 / IAM 13628 / NBRC 14792 / USDA 110).